The primary structure comprises 212 residues: Outer-membrane lipoprotein carrier protein (212 aa).

Residues 1–29 (MSSARRRALGFSFQALLLCAAGWHGAAQA) form the signal peptide.

Belongs to the LolA family. In terms of assembly, monomer.

It localises to the periplasm. Its function is as follows. Participates in the translocation of lipoproteins from the inner membrane to the outer membrane. Only forms a complex with a lipoprotein if the residue after the N-terminal Cys is not an aspartate (The Asp acts as a targeting signal to indicate that the lipoprotein should stay in the inner membrane). This is Outer-membrane lipoprotein carrier protein from Leptothrix cholodnii (strain ATCC 51168 / LMG 8142 / SP-6) (Leptothrix discophora (strain SP-6)).